The chain runs to 95 residues: UPF0125 protein BUsg_244 (95 aa).

This sequence belongs to the UPF0125 (RnfH) family.

The sequence is that of UPF0125 protein BUsg_244 from Buchnera aphidicola subsp. Schizaphis graminum (strain Sg).